The primary structure comprises 117 residues: Small ribosomal subunit protein uS17 (117 aa).

The segment at 97–117 is disordered; that stretch reads AEGLAAAHAGEPETESAATDA.

It belongs to the universal ribosomal protein uS17 family. In terms of assembly, part of the 30S ribosomal subunit.

One of the primary rRNA binding proteins, it binds specifically to the 5'-end of 16S ribosomal RNA. The sequence is that of Small ribosomal subunit protein uS17 from Rhodopirellula baltica (strain DSM 10527 / NCIMB 13988 / SH1).